Reading from the N-terminus, the 56-residue chain is Large ribosomal subunit protein bL33 (56 aa).

Over residues 1-12 (MATKGGREKIKL) the composition is skewed to basic and acidic residues. The disordered stretch occupies residues 1–28 (MATKGGREKIKLESTAGTGHFYTTSKNK). The span at 15 to 25 (TAGTGHFYTTS) shows a compositional bias: polar residues.

Belongs to the bacterial ribosomal protein bL33 family.

The chain is Large ribosomal subunit protein bL33 from Albidiferax ferrireducens (strain ATCC BAA-621 / DSM 15236 / T118) (Rhodoferax ferrireducens).